A 103-amino-acid chain; its full sequence is ATP synthase F(0) complex subunit g, mitochondrial (103 aa).

Ala-2 bears the N-acetylalanine mark. An N6-acetyllysine mark is found at Lys-11, Lys-24, Lys-35, and Lys-54.

Belongs to the ATPase g subunit family. In terms of assembly, component of the ATP synthase complex composed at least of ATP5F1A/subunit alpha, ATP5F1B/subunit beta, ATP5MC1/subunit c (homooctomer), MT-ATP6/subunit a, MT-ATP8/subunit 8, ATP5ME/subunit e, ATP5MF/subunit f, ATP5MG/subunit g, ATP5MK/subunit k, ATP5MJ/subunit j, ATP5F1C/subunit gamma, ATP5F1D/subunit delta, ATP5F1E/subunit epsilon, ATP5PF/subunit F6, ATP5PB/subunit b, ATP5PD/subunit d, ATP5PO/subunit OSCP. ATP synthase complex consists of a soluble F(1) head domain (subunits alpha(3) and beta(3)) - the catalytic core - and a membrane F(0) domain - the membrane proton channel (subunits c, a, 8, e, f, g, k and j). These two domains are linked by a central stalk (subunits gamma, delta, and epsilon) rotating inside the F1 region and a stationary peripheral stalk (subunits F6, b, d, and OSCP).

Its subcellular location is the mitochondrion. It localises to the mitochondrion inner membrane. Functionally, subunit g, of the mitochondrial membrane ATP synthase complex (F(1)F(0) ATP synthase or Complex V) that produces ATP from ADP in the presence of a proton gradient across the membrane which is generated by electron transport complexes of the respiratory chain. ATP synthase complex consist of a soluble F(1) head domain - the catalytic core - and a membrane F(1) domain - the membrane proton channel. These two domains are linked by a central stalk rotating inside the F(1) region and a stationary peripheral stalk. During catalysis, ATP synthesis in the catalytic domain of F(1) is coupled via a rotary mechanism of the central stalk subunits to proton translocation. In vivo, can only synthesize ATP although its ATP hydrolase activity can be activated artificially in vitro. Part of the complex F(0) domain. This chain is ATP synthase F(0) complex subunit g, mitochondrial, found in Mus musculus (Mouse).